A 209-amino-acid chain; its full sequence is Urease accessory protein UreG (209 aa).

Residue 10-17 (GPVGSGKT) coordinates GTP.

The protein belongs to the SIMIBI class G3E GTPase family. UreG subfamily. In terms of assembly, homodimer. UreD, UreF and UreG form a complex that acts as a GTP-hydrolysis-dependent molecular chaperone, activating the urease apoprotein by helping to assemble the nickel containing metallocenter of UreC. The UreE protein probably delivers the nickel.

The protein localises to the cytoplasm. Its function is as follows. Facilitates the functional incorporation of the urease nickel metallocenter. This process requires GTP hydrolysis, probably effectuated by UreG. The polypeptide is Urease accessory protein UreG (Lysinibacillus sphaericus (strain C3-41)).